Here is a 517-residue protein sequence, read N- to C-terminus: Bifunctional purine biosynthesis protein PurH (517 aa).

The 146-residue stretch at 1–146 folds into the MGS-like domain; the sequence is MKRLALLSTS…KNFAHLTVLC (146 aa).

The protein belongs to the PurH family.

The enzyme catalyses (6R)-10-formyltetrahydrofolate + 5-amino-1-(5-phospho-beta-D-ribosyl)imidazole-4-carboxamide = 5-formamido-1-(5-phospho-D-ribosyl)imidazole-4-carboxamide + (6S)-5,6,7,8-tetrahydrofolate. It carries out the reaction IMP + H2O = 5-formamido-1-(5-phospho-D-ribosyl)imidazole-4-carboxamide. It participates in purine metabolism; IMP biosynthesis via de novo pathway; 5-formamido-1-(5-phospho-D-ribosyl)imidazole-4-carboxamide from 5-amino-1-(5-phospho-D-ribosyl)imidazole-4-carboxamide (10-formyl THF route): step 1/1. It functions in the pathway purine metabolism; IMP biosynthesis via de novo pathway; IMP from 5-formamido-1-(5-phospho-D-ribosyl)imidazole-4-carboxamide: step 1/1. This Trichodesmium erythraeum (strain IMS101) protein is Bifunctional purine biosynthesis protein PurH.